The sequence spans 359 residues: Chorismate synthase (359 aa).

R47 provides a ligand contact to NADP(+). FMN-binding positions include 123–125 (RSS), G283, 298–302 (KPTSS), and R326.

Belongs to the chorismate synthase family. Homotetramer. It depends on FMNH2 as a cofactor.

The enzyme catalyses 5-O-(1-carboxyvinyl)-3-phosphoshikimate = chorismate + phosphate. It participates in metabolic intermediate biosynthesis; chorismate biosynthesis; chorismate from D-erythrose 4-phosphate and phosphoenolpyruvate: step 7/7. Catalyzes the anti-1,4-elimination of the C-3 phosphate and the C-6 proR hydrogen from 5-enolpyruvylshikimate-3-phosphate (EPSP) to yield chorismate, which is the branch point compound that serves as the starting substrate for the three terminal pathways of aromatic amino acid biosynthesis. This reaction introduces a second double bond into the aromatic ring system. This Chlamydia felis (strain Fe/C-56) (Chlamydophila felis) protein is Chorismate synthase.